Consider the following 382-residue polypeptide: MPTPALLVLADGSVFRGFSFGAPGTAIGEVVFNTGMTGYQEVLTDPSYYGQIVTFTYPELGNTGTTPEDDESDRPQVRGAVARNICDIPSNWRSQQSLPDYLKAHRIPAIYGIDTRALTRKIRTVGAMNGGISTEILDPVELLQKVLAAPSMQGQNLAKVVTTRTPYEWTEPTPAAWEFRPQTATEEPPLTVVAIDFGVKRNILRRLASYGCRVIVVPADTPAETILSYDPDGIFLSNGPGDPAAVQEGIETTRKLLGAQRPMFGICLGHQLLGLSLGAETFKLKFGHRGLNQPAGLTQEVEITSQNHGFAITAESLAQTPVEITHFNLNDKTVAGLKHQTLPIFSVQYHPEASPGPHDADYLFGEFVAQMRAYRQQHPRRQ.

A CPSase region spans residues 1 to 187 (MPTPALLVLA…EFRPQTATEE (187 aa)). L-glutamine contacts are provided by S47, G239, and G241. In terms of domain architecture, Glutamine amidotransferase type-1 spans 191 to 377 (TVVAIDFGVK…VAQMRAYRQQ (187 aa)). C267 (nucleophile) is an active-site residue. L-glutamine-binding residues include L268, Q271, N307, G309, and F310. Residues H350 and E352 contribute to the active site.

The protein belongs to the CarA family. As to quaternary structure, composed of two chains; the small (or glutamine) chain promotes the hydrolysis of glutamine to ammonia, which is used by the large (or ammonia) chain to synthesize carbamoyl phosphate. Tetramer of heterodimers (alpha,beta)4.

It catalyses the reaction hydrogencarbonate + L-glutamine + 2 ATP + H2O = carbamoyl phosphate + L-glutamate + 2 ADP + phosphate + 2 H(+). It carries out the reaction L-glutamine + H2O = L-glutamate + NH4(+). It functions in the pathway amino-acid biosynthesis; L-arginine biosynthesis; carbamoyl phosphate from bicarbonate: step 1/1. Its pathway is pyrimidine metabolism; UMP biosynthesis via de novo pathway; (S)-dihydroorotate from bicarbonate: step 1/3. Its function is as follows. Small subunit of the glutamine-dependent carbamoyl phosphate synthetase (CPSase). CPSase catalyzes the formation of carbamoyl phosphate from the ammonia moiety of glutamine, carbonate, and phosphate donated by ATP, constituting the first step of 2 biosynthetic pathways, one leading to arginine and/or urea and the other to pyrimidine nucleotides. The small subunit (glutamine amidotransferase) binds and cleaves glutamine to supply the large subunit with the substrate ammonia. In Thermosynechococcus vestitus (strain NIES-2133 / IAM M-273 / BP-1), this protein is Carbamoyl phosphate synthase small chain.